The chain runs to 108 residues: Tubulin-specific chaperone A (108 aa).

An N-acetylalanine modification is found at alanine 2.

The protein belongs to the TBCA family. In terms of assembly, supercomplex made of cofactors A to E. Cofactors A and D function by capturing and stabilizing tubulin in a quasi-native conformation. Cofactor E binds to the cofactor D-tubulin complex; interaction with cofactor C then causes the release of tubulin polypeptides that are committed to the native state.

The protein resides in the cytoplasm. It localises to the cytoskeleton. In terms of biological role, tubulin-folding protein; involved in the early step of the tubulin folding pathway. In Homo sapiens (Human), this protein is Tubulin-specific chaperone A (TBCA).